We begin with the raw amino-acid sequence, 1046 residues long: Nuclear pore complex protein NUP96 (1046 aa).

The Peptidase S59 domain occupies 51–187 (SPDYFLKPCI…GLWKFFVPHF (137 aa)). Polar residues predominate over residues 283–295 (RNVRPSQKIAQRN). A disordered region spans residues 283 to 304 (RNVRPSQKIAQRNSHQDPPPVV). A Phosphoserine modification is found at Ser523.

Part of the nuclear pore complex (NPC). The NPC has an eight-fold symmetrical structure comprising a central transport channel and two rings, the cytoplasmic and nuclear rings, to which eight filaments are attached. The cytoplasmic filaments have loose ends, while the nuclear filaments are joined in a distal ring, forming a nuclear basket. NPCs are highly dynamic in configuration and composition, and can be devided in 3 subcomplexes, the NUP62 subcomplex, the NUP107-160 subcomplex and the NUP93 subcomplex, containing approximately 30 different nucleoporin proteins. In terms of tissue distribution, expressed in roots, leaves, stems, flowers and siliques.

It is found in the nucleus membrane. Its subcellular location is the nucleus. It localises to the nuclear pore complex. Functionally, contributes to the transfer of mature mRNA from the nucleus to the cytosol. Required for both R gene-mediated and basal disease resistance. RNA export seems to play a critical role in stress responses and regulation of plant growth and development. The chain is Nuclear pore complex protein NUP96 from Arabidopsis thaliana (Mouse-ear cress).